The primary structure comprises 698 residues: eEF1A lysine and N-terminal methyltransferase (698 aa).

An N-acetylmethionine modification is found at Met-1. Ser-267 carries the phosphoserine modification. The tract at residues 431-461 is disordered; sequence KDTSHRAQKKRKKDRKKQRPADTSEDFPPAP. Residues 436–448 are compositionally biased toward basic residues; the sequence is RAQKKRKKDRKKQ.

This sequence belongs to the methyltransferase superfamily. Forms a tripartite complex containing GAB1, METTL13 and SPRY2. Within the complex interacts with GAB1 and SPRY2. As to expression, expressed in the inner ear (at protein level). Expression is detected in the cochlear duct, spiral limbus region, efferent and afferent nerves, and in spiral ganglion neurons (at protein level).

It is found in the cytoplasm. Its subcellular location is the nucleus. It localises to the mitochondrion. It carries out the reaction L-lysyl-[protein] + S-adenosyl-L-methionine = N(6)-methyl-L-lysyl-[protein] + S-adenosyl-L-homocysteine + H(+). The catalysed reaction is N(6)-methyl-L-lysyl-[protein] + S-adenosyl-L-methionine = N(6),N(6)-dimethyl-L-lysyl-[protein] + S-adenosyl-L-homocysteine + H(+). It catalyses the reaction N-terminal glycyl-L-lysyl-L-glutamyl-[protein] + 3 S-adenosyl-L-methionine = N-terminal N,N,N-trimethyl-glycyl-L-lysyl-L-glutamyl-[protein] + 3 S-adenosyl-L-homocysteine + 3 H(+). Functionally, dual methyltransferase that catalyzes methylation of elongation factor 1-alpha (EEF1A1 and EEF1A2) at two different positions, and is therefore involved in the regulation of mRNA translation. Via its C-terminus, methylates EEF1A1 and EEF1A2 at the N-terminal residue 'Gly-2'. Via its N-terminus dimethylates EEF1A1 and EEF1A2 at residue 'Lys-55'. Has no activity towards core histones H2A, H2B, H3 and H4. This Mus musculus (Mouse) protein is eEF1A lysine and N-terminal methyltransferase.